Reading from the N-terminus, the 393-residue chain is Pyrimidine monooxygenase RutA (393 aa).

Residues 79-80, N145, E154, 170-171, and S220 contribute to the FMN site; these read IK and RY.

Belongs to the NtaA/SnaA/DszA monooxygenase family. RutA subfamily.

The catalysed reaction is uracil + FMNH2 + NADH + O2 = (Z)-3-ureidoacrylate + FMN + NAD(+) + H2O + H(+). It carries out the reaction thymine + FMNH2 + NADH + O2 = (Z)-2-methylureidoacrylate + FMN + NAD(+) + H2O + H(+). In terms of biological role, catalyzes the pyrimidine ring opening between N-3 and C-4 by an unusual flavin hydroperoxide-catalyzed mechanism, adding oxygen atoms in the process to yield ureidoacrylate peracid, that immediately reacts with FMN forming ureidoacrylate and FMN-N(5)-oxide. The FMN-N(5)-oxide reacts spontaneously with NADH to produce FMN. Requires the flavin reductase RutF to regenerate FMN in vivo. This chain is Pyrimidine monooxygenase RutA, found in Escherichia coli O6:H1 (strain CFT073 / ATCC 700928 / UPEC).